The following is a 795-amino-acid chain: Copper-exporting P-type ATPase (795 aa).

HMA domains lie at 5–70 (QNAT…YDVV) and 72–138 (DKAE…YDAQ). Cu(+) is bound by residues cysteine 16, cysteine 19, cysteine 83, and cysteine 86. Transmembrane regions (helical) follow at residues 161–181 (LMISTILSLPLLMTMLVHLFN), 187–207 (ILMNPWFQFILATPIQFIIGW), 224–244 (MDVLVALGTSAAYFYSIYEMI), 256–276 (LYFETSAVLITLILFGKYLEA), 412–432 (YFVPIVIAIALLTFLIWITLV), and 440–460 (ALVAAISVLVIACPCALGLAT). The active-site 4-aspartylphosphate intermediate is the aspartate 496. Positions 690 and 694 each coordinate Mg(2+). Transmembrane regions (helical) follow at residues 747-764 (NLFWAFGYNIAGIPIAAM) and 770-788 (WIAGAAMALSSVSVVSNAL).

The protein belongs to the cation transport ATPase (P-type) (TC 3.A.3) family. Type IB subfamily.

The protein resides in the cell membrane. The enzyme catalyses Cu(+)(in) + ATP + H2O = Cu(+)(out) + ADP + phosphate + H(+). Functionally, involved in copper export. The polypeptide is Copper-exporting P-type ATPase (copA) (Staphylococcus haemolyticus (strain JCSC1435)).